The chain runs to 269 residues: Protein UL24 (269 aa).

The disordered stretch occupies residues 191 to 244 (IEPRTQRARRRRGGAARGSASRPKRSHSGARDPPESAARQLPPADQTPTSTEGG).

The protein belongs to the herpesviridae UL24 family.

It is found in the virion. It localises to the host cytoplasm. The protein resides in the host nucleus. Its subcellular location is the host nucleolus. The protein localises to the host Golgi apparatus. Functionally, may participate in nuclear egress of viral particles. Plays a role in the dispersal of several host nucleolar proteins including NCL/nucleolin and NPM1. Since deletion of host NCL/nucleolin negatively impact on nuclear egress, UL24 supposedly acts on this process through its effect on host nucleoli. This chain is Protein UL24, found in Homo sapiens (Human).